Here is a 253-residue protein sequence, read N- to C-terminus: Ribosomal RNA small subunit methyltransferase G (253 aa).

S-adenosyl-L-methionine contacts are provided by residues G84, F89, 135-136 (AE), and R154. Residues 228 to 253 (TPAKYPRREGVPTHQPLFWKAKEQSR) form a disordered region.

This sequence belongs to the methyltransferase superfamily. RNA methyltransferase RsmG family.

Its subcellular location is the cytoplasm. In terms of biological role, specifically methylates the N7 position of a guanine in 16S rRNA. This Deinococcus radiodurans (strain ATCC 13939 / DSM 20539 / JCM 16871 / CCUG 27074 / LMG 4051 / NBRC 15346 / NCIMB 9279 / VKM B-1422 / R1) protein is Ribosomal RNA small subunit methyltransferase G.